The sequence spans 642 residues: Threonine--tRNA ligase (642 aa).

One can recognise a TGS domain in the interval Met-1 to Ser-61. The catalytic stretch occupies residues Asp-243–Pro-534. The Zn(2+) site is built by Cys-334, His-385, and His-511.

This sequence belongs to the class-II aminoacyl-tRNA synthetase family. As to quaternary structure, homodimer. Zn(2+) is required as a cofactor.

It localises to the cytoplasm. It catalyses the reaction tRNA(Thr) + L-threonine + ATP = L-threonyl-tRNA(Thr) + AMP + diphosphate + H(+). Functionally, catalyzes the attachment of threonine to tRNA(Thr) in a two-step reaction: L-threonine is first activated by ATP to form Thr-AMP and then transferred to the acceptor end of tRNA(Thr). Also edits incorrectly charged L-seryl-tRNA(Thr). This Buchnera aphidicola subsp. Schizaphis graminum (strain Sg) protein is Threonine--tRNA ligase.